The sequence spans 401 residues: Voltage-gated potassium channel subunit beta-1 (401 aa).

Residues threonine 90, tryptophan 91, glutamine 97, and aspartate 119 each coordinate NADP(+). Tyrosine 124 functions as the Proton donor/acceptor in the catalytic mechanism. The NADP(+) site is built by asparagine 192, serine 222, arginine 223, glutamine 248, tryptophan 277, serine 278, proline 279, leucine 280, alanine 281, cysteine 282, lysine 288, arginine 298, glycine 357, serine 359, glutamine 363, glutamate 366, and asparagine 367.

It belongs to the shaker potassium channel beta subunit family. As to quaternary structure, homotetramer. Interaction with tetrameric potassium channel alpha subunits gives rise to a heterooctamer. Identified in potassium channel complexes containing KCNA1, KCNA2, KCNA4, KCNA5, KCNA6, KCNAB1 and KCNAB2. Part of a complex containing KCNA1, KCNA4 and LGI1; interaction with LGI1 inhibits down-regulation of KCNA1 channel activity. Interacts with the dimer formed by GNB1 and GNG2; this enhances KCNA1 binding. Interacts with SQSTM. In terms of tissue distribution, detected in brain, in hippocampus and striatum (at protein level). Predominantly expressed in brain. No expression found in heart, skeletal muscle or kidney. In the late embryonic and early neonatal brain, highly expressed in hippocampus, cerebral cortex, caudate putamen, colliculus and cerebellum.

The protein resides in the cytoplasm. Its subcellular location is the membrane. It is found in the cell membrane. It catalyses the reaction a primary alcohol + NADP(+) = an aldehyde + NADPH + H(+). It carries out the reaction a secondary alcohol + NADP(+) = a ketone + NADPH + H(+). Regulatory subunit of the voltage-gated potassium (Kv) Shaker channels composed of pore-forming and potassium-conducting alpha subunits and of regulatory beta subunits. The beta-1/KCNAB1 cytoplasmic subunit mediates closure of delayed rectifier potassium channels by physically obstructing the pore via its N-terminal domain and increases the speed of channel closure for other family members. Promotes the inactivation of KCNA1, KCNA2, KCNA4, KCNA5 and KCNA6 alpha subunit-containing channels. Displays nicotinamide adenine dinucleotide phosphate (NADPH)-dependent aldoketoreductase activity by catalyzing the NADPH-dependent reduction of a variety of endogenous aldehydes and ketones. The binding of NADPH is required for efficient down-regulation of potassium channel activity. Oxidation of the bound NADPH restrains N-terminal domain from blocking the channel, thereby decreasing N-type inactivation of potassium channel activity. In Mus musculus (Mouse), this protein is Voltage-gated potassium channel subunit beta-1.